Consider the following 227-residue polypeptide: Fibrillarin-like rRNA/tRNA 2'-O-methyltransferase (227 aa).

S-adenosyl-L-methionine contacts are provided by residues 86 to 87 (TT), 105 to 106 (EF), 130 to 131 (DA), and 150 to 153 (DVAQ).

The protein belongs to the methyltransferase superfamily. Fibrillarin family. Interacts with nop5. Component of box C/D small ribonucleoprotein (sRNP) particles that contain rpl7ae, FlpA and nop5, plus a guide RNA.

Functionally, involved in pre-rRNA and tRNA processing. Utilizes the methyl donor S-adenosyl-L-methionine to catalyze the site-specific 2'-hydroxyl methylation of ribose moieties in rRNA and tRNA. Site specificity is provided by a guide RNA that base pairs with the substrate. Methylation occurs at a characteristic distance from the sequence involved in base pairing with the guide RNA. This is Fibrillarin-like rRNA/tRNA 2'-O-methyltransferase from Pyrococcus abyssi (strain GE5 / Orsay).